The following is a 360-amino-acid chain: Phospho-N-acetylmuramoyl-pentapeptide-transferase (360 aa).

Helical transmembrane passes span 26–46 (AILG…KMIA), 73–93 (TMGG…WGDL), 97–117 (YVWV…IDDY), 132–152 (WKYL…YASA), 168–188 (VMPQ…VGSS), 199–219 (GLAI…AYLS), 236–256 (AGEL…FLWF), 263–283 (VFMG…IAVL), 288–308 (ILLV…ILQV), and 338–358 (VIVR…ATLK).

Belongs to the glycosyltransferase 4 family. MraY subfamily. It depends on Mg(2+) as a cofactor.

The protein resides in the cell inner membrane. The catalysed reaction is UDP-N-acetyl-alpha-D-muramoyl-L-alanyl-gamma-D-glutamyl-meso-2,6-diaminopimeloyl-D-alanyl-D-alanine + di-trans,octa-cis-undecaprenyl phosphate = di-trans,octa-cis-undecaprenyl diphospho-N-acetyl-alpha-D-muramoyl-L-alanyl-D-glutamyl-meso-2,6-diaminopimeloyl-D-alanyl-D-alanine + UMP. It functions in the pathway cell wall biogenesis; peptidoglycan biosynthesis. Catalyzes the initial step of the lipid cycle reactions in the biosynthesis of the cell wall peptidoglycan: transfers peptidoglycan precursor phospho-MurNAc-pentapeptide from UDP-MurNAc-pentapeptide onto the lipid carrier undecaprenyl phosphate, yielding undecaprenyl-pyrophosphoryl-MurNAc-pentapeptide, known as lipid I. In Shewanella halifaxensis (strain HAW-EB4), this protein is Phospho-N-acetylmuramoyl-pentapeptide-transferase.